An 84-amino-acid polypeptide reads, in one-letter code: Large ribosomal subunit protein bL27c (84 aa).

A disordered region spans residues 1-23 (MAHKKGAGSTKNGRDSNAKRLGV).

The protein belongs to the bacterial ribosomal protein bL27 family.

It is found in the plastid. The protein resides in the chloroplast. In Thalassiosira pseudonana (Marine diatom), this protein is Large ribosomal subunit protein bL27c.